A 68-amino-acid chain; its full sequence is Protein SlyX homolog (68 aa).

It belongs to the SlyX family.

This is Protein SlyX homolog from Pseudomonas putida (strain GB-1).